The following is a 252-amino-acid chain: DNA repair protein RecO (252 aa).

The protein belongs to the RecO family.

Functionally, involved in DNA repair and RecF pathway recombination. This chain is DNA repair protein RecO, found in Rhodospirillum rubrum (strain ATCC 11170 / ATH 1.1.1 / DSM 467 / LMG 4362 / NCIMB 8255 / S1).